The sequence spans 226 residues: Thaumatin-like protein (226 aa).

Positions 1–24 (MNFSKNLPLLVSLWAITFFAYTHA) are cleaved as a signal peptide. Cystine bridges form between cysteine 33-cysteine 225, cysteine 74-cysteine 84, cysteine 89-cysteine 95, cysteine 140-cysteine 214, cysteine 145-cysteine 197, cysteine 153-cysteine 163, cysteine 167-cysteine 176, and cysteine 177-cysteine 184.

It belongs to the thaumatin family. As to expression, expressed in fruits.

The protein resides in the secreted. In terms of biological role, 3D-structure modeling suggests it may have endo-(1,3)-beta-glucanase activity. This chain is Thaumatin-like protein, found in Olea europaea (Common olive).